Consider the following 307-residue polypeptide: MAERSELHTRNKHNGQYDFSLLTENYPPLRKFVLLNPLGIQTIDFFNPHAVKALNKALLISYYGIRYWDIPRNYLCPPIPGRADYVHYIADLIDPERVSNTANEENGDKPKRQCRCLDIGVGANCIYPIIGHVEYGWMFVGSDIDPVSIENARKIVTCNPVLAHKIDLRLQKDNRRIFDGIIAPDEYFDVTICNPPFHSSKKEAEEGTLRKLSSLKGEKVKKTKLNFGGNANELWCEGGELRFLLNMISESRKYRKNCGWFTSLVSKEKNLDKLYAKLKAVHVSEYKIIRMCQGTKNSRILAWRFLE.

The protein belongs to the methyltransferase superfamily. METTL16/RlmF family.

It is found in the cytoplasm. The catalysed reaction is adenosine(1618) in 23S rRNA + S-adenosyl-L-methionine = N(6)-methyladenosine(1618) in 23S rRNA + S-adenosyl-L-homocysteine + H(+). Its function is as follows. Specifically methylates the adenine in position 1618 of 23S rRNA. The sequence is that of Ribosomal RNA large subunit methyltransferase F from Bacteroides thetaiotaomicron (strain ATCC 29148 / DSM 2079 / JCM 5827 / CCUG 10774 / NCTC 10582 / VPI-5482 / E50).